We begin with the raw amino-acid sequence, 582 residues long: Formate--tetrahydrofolate ligase (582 aa).

65 to 72 (TPLGEGKT) serves as a coordination point for ATP.

This sequence belongs to the formate--tetrahydrofolate ligase family.

The enzyme catalyses (6S)-5,6,7,8-tetrahydrofolate + formate + ATP = (6R)-10-formyltetrahydrofolate + ADP + phosphate. Its pathway is one-carbon metabolism; tetrahydrofolate interconversion. In Vibrio cholerae serotype O1 (strain ATCC 39315 / El Tor Inaba N16961), this protein is Formate--tetrahydrofolate ligase.